We begin with the raw amino-acid sequence, 600 residues long: Melanophilin (600 aa).

In terms of domain architecture, RabBD spans 4–124; that stretch reads KLDLSKLTDE…IGSLEWYYEH (121 aa). Residues 64 to 107 form an FYVE-type zinc finger; that stretch reads CARCLQPYQLLVNSKRQCLECGLFTCKSCGRVHPEEQGWICDPC. Disordered stretches follow at residues 146–277, 390–465, 499–541, and 553–600; these read QGGA…AELC, EELT…LSEL, TVKP…AKAM, and NSLK…AHQS. Basic and acidic residues-rich tracts occupy residues 232–243 and 409–420; these read CSEKAAPHKAEG and KDEKAEPNRDKS. Positions 373–496 form a coiled coil; the sequence is GVRTEADVEE…ESRIAALRAA (124 aa). Positions 558-569 are enriched in basic and acidic residues; the sequence is QGKDDDSFDRKS.

Binds RAB27A that has been activated by GTP-binding via its N-terminus. Binds MYO5A via its C-terminal coiled coil domain.

It is found in the cytoplasm. Its function is as follows. Rab effector protein involved in melanosome transport. Serves as link between melanosome-bound RAB27A and the motor protein MYO5A. This chain is Melanophilin (MLPH), found in Homo sapiens (Human).